Consider the following 238-residue polypeptide: Ribosomal RNA large subunit methyltransferase E (238 aa).

Residues G85, W87, D113, D129, and D153 each coordinate S-adenosyl-L-methionine. K193 functions as the Proton acceptor in the catalytic mechanism.

This sequence belongs to the class I-like SAM-binding methyltransferase superfamily. RNA methyltransferase RlmE family.

Its subcellular location is the cytoplasm. The catalysed reaction is uridine(2552) in 23S rRNA + S-adenosyl-L-methionine = 2'-O-methyluridine(2552) in 23S rRNA + S-adenosyl-L-homocysteine + H(+). Specifically methylates the uridine in position 2552 of 23S rRNA at the 2'-O position of the ribose in the fully assembled 50S ribosomal subunit. In Ruegeria sp. (strain TM1040) (Silicibacter sp.), this protein is Ribosomal RNA large subunit methyltransferase E.